Consider the following 37-residue polypeptide: DGECGDKDEPCCGRPDGAKVCNDPWVCILTSSRCENP.

3 disulfide bridges follow: Cys4–Cys12, Cys11–Cys27, and Cys21–Cys34.

As to expression, expressed by the venom duct.

It localises to the secreted. This toxin reduces the outward currents that are due to the opening of voltage-gated potassium channels in DRG neurons. In addition, leftward shift in the presence of this toxin is observed in averaged normalized conductance-voltage plot of outward sodium currents (Nav1.2/SCN2A). This is Delta/kappa-conotoxin Mo3964 from Conus monile (Necklace cone).